The chain runs to 877 residues: Phosphoenolpyruvate carboxylase (877 aa).

Catalysis depends on residues H138 and K544.

It belongs to the PEPCase type 1 family. The cofactor is Mg(2+).

It catalyses the reaction oxaloacetate + phosphate = phosphoenolpyruvate + hydrogencarbonate. Forms oxaloacetate, a four-carbon dicarboxylic acid source for the tricarboxylic acid cycle. This chain is Phosphoenolpyruvate carboxylase, found in Vibrio vulnificus (strain YJ016).